The following is a 243-amino-acid chain: Ribosomal RNA small subunit methyltransferase J (243 aa).

Residues 112–113 and aspartate 164 contribute to the S-adenosyl-L-methionine site; that span reads ER.

This sequence belongs to the methyltransferase superfamily. RsmJ family.

It localises to the cytoplasm. It carries out the reaction guanosine(1516) in 16S rRNA + S-adenosyl-L-methionine = N(2)-methylguanosine(1516) in 16S rRNA + S-adenosyl-L-homocysteine + H(+). In terms of biological role, specifically methylates the guanosine in position 1516 of 16S rRNA. The sequence is that of Ribosomal RNA small subunit methyltransferase J from Legionella pneumophila (strain Lens).